The chain runs to 209 residues: rRNA N(6)-adenosine-methyltransferase METTL5 (209 aa).

S-adenosyl-L-methionine is bound by residues Q28, T31, G59, C62, V64, D81, and 108 to 109 (DV).

Belongs to the methyltransferase superfamily. PrmA family. In terms of assembly, heterodimer; heterodimerizes with TRMT112. As to expression, expressed from very early development (8 post-conceptual weeks) and expression persists through adulthood in multiple substructures of the brain, including the cerebellar cortex, hippocampus, and striatum.

It is found in the nucleus. The protein resides in the presynapse. The protein localises to the postsynapse. It catalyses the reaction adenosine(1832) in 18S rRNA + S-adenosyl-L-methionine = N(6)-methyladenosine(1832) in 18S rRNA + S-adenosyl-L-homocysteine + H(+). With respect to regulation, rRNA N6-adenosine-methyltransferase activity is inhibited by zinc. Its function is as follows. Catalytic subunit of a heterodimer with TRMT112, which specifically methylates the 6th position of adenine in position 1832 of 18S rRNA. N6-methylation of adenine(1832) in 18S rRNA resides in the decoding center of 18S rRNA and is required for translation and embryonic stem cells (ESCs) pluripotency and differentiation. This Homo sapiens (Human) protein is rRNA N(6)-adenosine-methyltransferase METTL5.